The following is a 100-amino-acid chain: uncharacterized protein (100 aa).

Residues Pro65–Phe96 are a coiled coil.

This is an uncharacterized protein from Acidianus filamentous virus 2 (isolate Italy/Pozzuoli) (AFV-2).